Here is a 381-residue protein sequence, read N- to C-terminus: Transaldolase 1 (381 aa).

Residue Lys-149 is the Schiff-base intermediate with substrate of the active site.

Belongs to the transaldolase family. Type 2 subfamily.

It is found in the cytoplasm. The catalysed reaction is D-sedoheptulose 7-phosphate + D-glyceraldehyde 3-phosphate = D-erythrose 4-phosphate + beta-D-fructose 6-phosphate. The protein operates within carbohydrate degradation; pentose phosphate pathway; D-glyceraldehyde 3-phosphate and beta-D-fructose 6-phosphate from D-ribose 5-phosphate and D-xylulose 5-phosphate (non-oxidative stage): step 2/3. Transaldolase is important for the balance of metabolites in the pentose-phosphate pathway. The chain is Transaldolase 1 (tal1) from Streptomyces coelicolor (strain ATCC BAA-471 / A3(2) / M145).